Here is a 349-residue protein sequence, read N- to C-terminus: Core protein VP7 (349 aa).

Asparagine 287 carries N-linked (GlcNAc...) asparagine; by host glycosylation.

The protein belongs to the orbivirus VP7 family. In terms of assembly, homotrimer that assemble in a complex of 260 capsomers on an inner scaffold composed of VP3.

The protein resides in the virion. In terms of biological role, the VP7 protein is one of the five proteins (with VP1, VP3, VP4, and VP6) which form the inner capsid of the virus. The chain is Core protein VP7 (Segment-7) from Antilocapra americana (Pronghorn).